Here is a 332-residue protein sequence, read N- to C-terminus: Alpha-N-acetylgalactosaminide alpha-2,6-sialyltransferase 6 (332 aa).

A disordered region spans residues 1–26 (MACPRPLSQCDHTPLPGPPAGHWPLP). Topologically, residues 1 to 42 (MACPRPLSQCDHTPLPGPPAGHWPLPLSRRRREMKSNKEQRS) are cytoplasmic. Residues 43–63 (AVFVILFALITILILYSSSSA) traverse the membrane as a helical; Signal-anchor for type II membrane protein segment. At 64 to 332 (NEVFHYGSLR…GITFSHPSWT (269 aa)) the chain is on the lumenal side. The N-linked (GlcNAc...) asparagine glycan is linked to Asn-97. Cys-107 and Cys-255 are joined by a disulfide.

This sequence belongs to the glycosyltransferase 29 family.

The protein resides in the golgi apparatus membrane. The catalysed reaction is a ganglioside GM1b (d18:1(4E)) + CMP-N-acetyl-beta-neuraminate = a ganglioside GD1alpha (d18:1(4E)) + CMP + H(+). It catalyses the reaction N-acetyl-alpha-neuraminosyl-(2-&gt;3)-beta-D-galactosyl-(1-&gt;3)-N-acetyl-beta-D-glucosaminyl-(1-&gt;3)-beta-D-galactosyl-(1-&gt;4)-beta-D-glucosyl-(1&lt;-&gt;1')-N-acyl-sphing-4-enine + CMP-N-acetyl-beta-neuraminate = N-acetyl-alpha-neuraminosyl-(2-&gt;3)-beta-D-galactosyl-(1-&gt;3)-[N-acetyl-alpha-neuraminosyl-(2-&gt;6)]-N-acetyl-beta-D-glucosaminyl-(1-&gt;3)-beta-D-galactosyl-(1-&gt;4)-beta-D-glucosyl-(1&lt;-&gt;1')-N-acyl-sphing-4-enine + CMP + H(+). It carries out the reaction a globoside MSGG + CMP-N-acetyl-beta-neuraminate = a globoside DSGG + CMP + H(+). The enzyme catalyses a ganglioside GD1a (d18:1(4E)) + CMP-N-acetyl-beta-neuraminate = a ganglioside GT1aalpha (d18:1(4E)) + CMP + H(+). The catalysed reaction is a ganglioside GT1b (d18:1(4E)) + CMP-N-acetyl-beta-neuraminate = a ganglioside GQ1balpha (d18:1(4E)) + CMP + H(+). It catalyses the reaction 3-O-[alpha-Neu5Ac-(2-&gt;3)-beta-D-Gal-(1-&gt;3)-alpha-D-GalNAc]-L-Ser-[protein] + CMP-N-acetyl-beta-neuraminate = a 3-O-{alpha-Neu5Ac-(2-&gt;3)-beta-D-Gal-(1-&gt;3)-[alpha-Neu5Ac-(2-&gt;6)]-alpha-D-GalNAc}-L-seryl-[protein] + CMP + H(+). It carries out the reaction 3-O-[alpha-Neu5Ac-(2-&gt;3)-beta-D-Gal-(1-&gt;3)-alpha-D-GalNAc]-L-Thr-[protein] + CMP-N-acetyl-beta-neuraminate = a 3-O-{alpha-Neu5Ac-(2-&gt;3)-beta-D-Gal-(1-&gt;3)-[alpha-Neu5Ac-(2-&gt;6)]-alpha-D-GalNAc}-L-threonyl-[protein] + CMP + H(+). Its function is as follows. Transfers the sialyl group (N-acetyl-alpha-neuraminyl or NeuAc) from CMP-NeuAc onto glycoproteins and glycolipids, forming an alpha-2,6-linkage. Produces branched type disialyl structures by transfer of a sialyl group onto the GalNAc or GlcNAc residue inside backbone core chains having a terminal sialic acid with an alpha-2,3-linkage on Gal. ST6GalNAcVI prefers glycolipids to glycoproteins, predominantly catalyzing the biosynthesis of ganglioside GD1alpha from GM1b. Besides GMb1, MSGG and other glycolipids, it shows activity towards sialyl Lc4Cer generating disialyl Lc4Cer, which can lead to the synthesis of disialyl Lewis a (Le(a)), suggested to be a cancer-associated antigen. Also has activity toward GD1a and GT1b, and can generate DSGG (disialylgalactosylgloboside) from MSGG (monosialylgalactosylgloboside). The sequence is that of Alpha-N-acetylgalactosaminide alpha-2,6-sialyltransferase 6 (ST6GALNAC6) from Bos taurus (Bovine).